We begin with the raw amino-acid sequence, 513 residues long: Calcium-dependent protein kinase 2 (513 aa).

Residues 65–323 (YSFGKELGRG…SAQVLQHQWL (259 aa)) enclose the Protein kinase domain. Residues 71–79 (LGRGQFGVT) and Lys94 contribute to the ATP site. The active-site Proton acceptor is the Asp189. The interval 329–359 (ASDKPIDSAVLSRMKQFRAMNKLKKMALKVI) is autoinhibitory domain. 4 EF-hand domains span residues 366–401 (EEIK…LGSK), 402–437 (LSEA…RHKL), 438–473 (ERDE…HEMG), and 478–508 (IREI…GMQQ). Residues Asp379, Asp381, Ser383, Thr385, Glu390, Asp415, Asp417, Asn419, Ser421, Glu426, Asp451, Asp453, Ser455, Glu462, Asp486, Asp488, Asp490, Arg492, and Glu497 each contribute to the Ca(2+) site.

It belongs to the protein kinase superfamily. Ser/Thr protein kinase family. CDPK subfamily.

The catalysed reaction is L-seryl-[protein] + ATP = O-phospho-L-seryl-[protein] + ADP + H(+). It carries out the reaction L-threonyl-[protein] + ATP = O-phospho-L-threonyl-[protein] + ADP + H(+). With respect to regulation, activated by calcium. Autophosphorylation may play an important role in the regulation of the kinase activity. Functionally, may play a role in signal transduction pathways that involve calcium as a second messenger. This chain is Calcium-dependent protein kinase 2 (CPK2), found in Zea mays (Maize).